Here is a 210-residue protein sequence, read N- to C-terminus: UPF0301 protein CPS_1252 (210 aa).

It belongs to the UPF0301 (AlgH) family.

This is UPF0301 protein CPS_1252 from Colwellia psychrerythraea (strain 34H / ATCC BAA-681) (Vibrio psychroerythus).